Consider the following 767-residue polypeptide: Photosystem I P700 chlorophyll a apoprotein A1 (767 aa).

The next 8 membrane-spanning stretches (helical) occupy residues 72–95 (IFSAHFGHLAVIFIWLSGAFFHGA), 158–181 (LMSLAIGALVMAGLMLNAGVFHYH), 197–221 (LNHHLAGLLGLGSLSWTGHLLHVSL), 305–323 (IAHHHLAIAVLFIVAGHMY), 364–387 (WHAQLAVNLAMLGSLSIIVAQHMY), 403–429 (IGLFTHHMWIGGFLIVGAAAHAAIAMI), 451–473 (ALISHLNWVCIWLGFHSFGLYIH), and 548–566 (FMVHHIHAFTIHVTVLILL). [4Fe-4S] cluster contacts are provided by cysteine 590 and cysteine 599. 2 helical membrane-spanning segments follow: residues 606-627 (HVFLGLFWMYNSLSIVIFHFSW) and 681-703 (TSAYGLMFLGAHFVWAFSLMFLF). Histidine 692 is a binding site for chlorophyll a'. The chlorophyll a site is built by methionine 700 and tyrosine 708. Tryptophan 709 lines the phylloquinone pocket. Residues 741 to 761 (AVGVAHYLLGGIATTWAFFHA) traverse the membrane as a helical segment.

This sequence belongs to the PsaA/PsaB family. The PsaA/B heterodimer binds the P700 chlorophyll special pair and subsequent electron acceptors. PSI consists of a core antenna complex that captures photons, and an electron transfer chain that converts photonic excitation into a charge separation. The cyanobacterial PSI reaction center is composed of one copy each of PsaA,B,C,D,E,F,I,J,K,L,M and X, and forms trimeric complexes. Requires PSI electron transfer chain: 5 chlorophyll a, 1 chlorophyll a', 2 phylloquinones and 3 4Fe-4S clusters. PSI core antenna: 90 chlorophyll a, 22 carotenoids, 3 phospholipids and 1 galactolipid. P700 is a chlorophyll a/chlorophyll a' dimer, A0 is one or more chlorophyll a, A1 is one or both phylloquinones and FX is a shared 4Fe-4S iron-sulfur center. as cofactor.

Its subcellular location is the cellular thylakoid membrane. It catalyses the reaction reduced [plastocyanin] + hnu + oxidized [2Fe-2S]-[ferredoxin] = oxidized [plastocyanin] + reduced [2Fe-2S]-[ferredoxin]. Functionally, psaA and PsaB bind P700, the primary electron donor of photosystem I (PSI), as well as the electron acceptors A0, A1 and FX. PSI is a plastocyanin/cytochrome c6-ferredoxin oxidoreductase, converting photonic excitation into a charge separation, which transfers an electron from the donor P700 chlorophyll pair to the spectroscopically characterized acceptors A0, A1, FX, FA and FB in turn. Oxidized P700 is reduced on the lumenal side of the thylakoid membrane by plastocyanin or cytochrome c6. In Synechococcus sp. (strain WH7803), this protein is Photosystem I P700 chlorophyll a apoprotein A1.